Here is a 469-residue protein sequence, read N- to C-terminus: Sulfate adenylyltransferase subunit 1 (469 aa).

Positions 22–237 constitute a tr-type G domain; the sequence is KEVLRFITCG…LEEVPVKSEE (216 aa). The segment at 31–38 is G1; sequence GSVDDGKS. 31–38 is a GTP binding site; the sequence is GSVDDGKS. A G2 region spans residues 89–93; that stretch reads GITID. The interval 110 to 113 is G3; sequence DTPG. GTP is bound by residues 110-114 and 165-168; these read DTPGH and NKMD. The interval 165–168 is G4; that stretch reads NKMD. Residues 202-204 form a G5 region; sequence SAK.

It belongs to the TRAFAC class translation factor GTPase superfamily. Classic translation factor GTPase family. CysN/NodQ subfamily. As to quaternary structure, heterodimer composed of CysD, the smaller subunit, and CysN.

The enzyme catalyses sulfate + ATP + H(+) = adenosine 5'-phosphosulfate + diphosphate. The protein operates within sulfur metabolism; hydrogen sulfide biosynthesis; sulfite from sulfate: step 1/3. In terms of biological role, with CysD forms the ATP sulfurylase (ATPS) that catalyzes the adenylation of sulfate producing adenosine 5'-phosphosulfate (APS) and diphosphate, the first enzymatic step in sulfur assimilation pathway. APS synthesis involves the formation of a high-energy phosphoric-sulfuric acid anhydride bond driven by GTP hydrolysis by CysN coupled to ATP hydrolysis by CysD. The chain is Sulfate adenylyltransferase subunit 1 from Methylorubrum extorquens (strain PA1) (Methylobacterium extorquens).